The primary structure comprises 480 residues: Acetyl-coenzyme A carboxylase carboxyl transferase subunit beta, chloroplastic (480 aa).

Residues leucine 212 to lysine 480 form the CoA carboxyltransferase N-terminal domain. Zn(2+) is bound by residues cysteine 216, cysteine 219, cysteine 235, and cysteine 238. The C4-type zinc finger occupies cysteine 216–cysteine 238.

This sequence belongs to the AccD/PCCB family. As to quaternary structure, acetyl-CoA carboxylase is a heterohexamer composed of biotin carboxyl carrier protein, biotin carboxylase and 2 subunits each of ACCase subunit alpha and ACCase plastid-coded subunit beta (accD). It depends on Zn(2+) as a cofactor.

It localises to the plastid. The protein localises to the chloroplast stroma. It catalyses the reaction N(6)-carboxybiotinyl-L-lysyl-[protein] + acetyl-CoA = N(6)-biotinyl-L-lysyl-[protein] + malonyl-CoA. It functions in the pathway lipid metabolism; malonyl-CoA biosynthesis; malonyl-CoA from acetyl-CoA: step 1/1. In terms of biological role, component of the acetyl coenzyme A carboxylase (ACC) complex. Biotin carboxylase (BC) catalyzes the carboxylation of biotin on its carrier protein (BCCP) and then the CO(2) group is transferred by the transcarboxylase to acetyl-CoA to form malonyl-CoA. This chain is Acetyl-coenzyme A carboxylase carboxyl transferase subunit beta, chloroplastic, found in Illicium oligandrum (Star anise).